The following is a 455-amino-acid chain: Ribosome biogenesis protein NOP53 (455 aa).

Residues 1 to 15 (MAPTNLTKKPSQYKQ) are compositionally biased toward polar residues. The segment at 1-25 (MAPTNLTKKPSQYKQSSRKGKKAWR) is disordered. Basic residues predominate over residues 16–25 (SSRKGKKAWR). A Phosphoserine modification is found at S31. Positions 264–333 (HLMETLDDNE…RNKAKRHEEK (70 aa)) are disordered. Residues 268-294 (TLDDNEEEESSSNEEEEEEEEENENEN) show a composition bias toward acidic residues. Basic residues predominate over residues 314 to 328 (VKNKKKTKYQRNKAK).

It belongs to the NOP53 family. As to quaternary structure, interacts with CBF5, FPR3, FPR4, NOP2, PIH1, RRN3, RRP6 and PAP2. Interacts with pre-60S ribosomal particles.

It localises to the nucleus. Its subcellular location is the nucleolus. It is found in the nucleoplasm. Its function is as follows. Late-acting factor in the nuclear maturation of 60S ribosomal subunits, which is required for normal acquisition of export competence. Required for the export of the large subunit. Acts to stimulate the RNase activity of the exosome complex, and may recruit the exosome to 7S pre-rRNA for processing. Associates with numerous RNAs including the 27S and 7S pre-rRNAs and the box H/ACA snoRNA snR37. Also interacts (via N-terminal region) with the mature 25S rRNA and the mature 5.8S rRNA. This chain is Ribosome biogenesis protein NOP53, found in Saccharomyces cerevisiae (strain ATCC 204508 / S288c) (Baker's yeast).